Reading from the N-terminus, the 549-residue chain is Vacuolar fusion protein MON1 homolog A (549 aa).

Disordered stretches follow at residues 1–90 and 109–137; these read MAAD…EQIS and EEMRQSQEGKLEPSPQATRHDSVLSGKEE. Residues 110–119 show a composition bias toward basic and acidic residues; sequence EMRQSQEGKL.

It belongs to the MON1/SAND family.

In terms of biological role, plays an important role in membrane trafficking through the secretory apparatus. Not involved in endocytic trafficking to lysosomes. In Gallus gallus (Chicken), this protein is Vacuolar fusion protein MON1 homolog A (MON1A).